A 142-amino-acid chain; its full sequence is uncharacterized protein (142 aa).

Residues 1 to 22 (MSGSVNQNTDQHSQDSSSTPNN) are disordered. 2 helical membrane passes run 63–83 (LFVM…VLLV) and 109–129 (IIDG…FVDL).

It localises to the membrane. This is an uncharacterized protein from Acanthamoeba polyphaga mimivirus (APMV).